The chain runs to 239 residues: Ribosomal RNA small subunit methyltransferase G (239 aa).

Residues Gly77, Phe82, 128–129 (AE), and Arg147 contribute to the S-adenosyl-L-methionine site.

This sequence belongs to the methyltransferase superfamily. RNA methyltransferase RsmG family.

The protein localises to the cytoplasm. Its function is as follows. Specifically methylates the N7 position of guanine in position 535 of 16S rRNA. The protein is Ribosomal RNA small subunit methyltransferase G of Bacillus cereus (strain ZK / E33L).